Reading from the N-terminus, the 247-residue chain is UDP-2,3-diacylglucosamine hydrolase (247 aa).

Residues aspartate 8, histidine 10, aspartate 41, asparagine 79, and histidine 114 each contribute to the Mn(2+) site. Position 79-80 (79-80 (NR)) interacts with substrate. Substrate is bound by residues aspartate 122, serine 160, aspartate 171, arginine 174, and histidine 202. Mn(2+) contacts are provided by histidine 202 and histidine 204.

Belongs to the LpxH family. Mn(2+) is required as a cofactor.

It is found in the cell inner membrane. The enzyme catalyses UDP-2-N,3-O-bis[(3R)-3-hydroxytetradecanoyl]-alpha-D-glucosamine + H2O = 2-N,3-O-bis[(3R)-3-hydroxytetradecanoyl]-alpha-D-glucosaminyl 1-phosphate + UMP + 2 H(+). Its pathway is glycolipid biosynthesis; lipid IV(A) biosynthesis; lipid IV(A) from (3R)-3-hydroxytetradecanoyl-[acyl-carrier-protein] and UDP-N-acetyl-alpha-D-glucosamine: step 4/6. In terms of biological role, hydrolyzes the pyrophosphate bond of UDP-2,3-diacylglucosamine to yield 2,3-diacylglucosamine 1-phosphate (lipid X) and UMP by catalyzing the attack of water at the alpha-P atom. Involved in the biosynthesis of lipid A, a phosphorylated glycolipid that anchors the lipopolysaccharide to the outer membrane of the cell. The polypeptide is UDP-2,3-diacylglucosamine hydrolase (Xanthomonas axonopodis pv. citri (strain 306)).